Reading from the N-terminus, the 314-residue chain is Malate dehydrogenase (314 aa).

NAD(+) is bound by residues 11–16 and Asp-35; that span reads GSGNIG. Substrate contacts are provided by Arg-84 and Arg-90. Residues Asn-97 and 120–122 each bind NAD(+); that span reads ITN. Residues Asn-122 and Arg-153 each coordinate substrate. The active-site Proton acceptor is His-177.

Belongs to the LDH/MDH superfamily. MDH type 3 family.

The enzyme catalyses (S)-malate + NAD(+) = oxaloacetate + NADH + H(+). In terms of biological role, catalyzes the reversible oxidation of malate to oxaloacetate. This chain is Malate dehydrogenase, found in Rickettsia bellii (strain OSU 85-389).